We begin with the raw amino-acid sequence, 196 residues long: SAGA-associated factor 11 homolog (196 aa).

Residues 102–123 form an SGF11-type zinc finger; sequence CTCPNCDRLVAAARFAPHLEKC. The interval 140–196 is disordered; sequence TKEGTSASSNSSYVHSGANAGGTDDEDDVDWSSDKRKKKSTQNSRNNGSKKNNGKTF. Polar residues predominate over residues 142–153; sequence EGTSASSNSSYV. Residue serine 172 is modified to Phosphoserine. Low complexity predominate over residues 182–196; the sequence is NSRNNGSKKNNGKTF.

The protein belongs to the SGF11 family. In terms of assembly, component of some SAGA transcription coactivator-HAT complexes, at least composed of Ada2b, not/nonstop, Pcaf/Gcn5, Sgf11 and Spt3. Within the SAGA complex, Sgf11, e(y)2, and not/nonstop form an additional subcomplex of SAGA called the DUB module (deubiquitination module). Interacts directly with not/nonstop. Interacts with the AMEX complex component xmas-2. Interacts with Cbp80; important for promoter recruitment of Sgf11 that is not associated with the DUB module.

It localises to the nucleus. It is found in the nucleoplasm. The protein resides in the cytoplasm. In terms of biological role, component of the transcription regulatory histone acetylation (HAT) complex SAGA, a multiprotein complex that activates transcription by remodeling chromatin and mediating histone acetylation and deubiquitination. Within the SAGA complex, participates in a subcomplex that specifically deubiquitinates histone H2B. The SAGA complex is recruited to specific gene promoters by activators, where it is required for transcription. Required for nuclear receptor-mediated transactivation. Binds independently on SAGA to promoters in an RNA-dependent manner. Binds to mRNA and is essential for total mRNA export from the nucleus. Required to counteract heterochromatin silencing. Controls the development of neuronal connectivity in visual system by being required for accurate axon targeting in the optic lobe. Required for expression of ecdysone-induced genes such as br/broad. The protein is SAGA-associated factor 11 homolog of Drosophila persimilis (Fruit fly).